The sequence spans 498 residues: Putative phosphotransferase 057R (498 aa).

This is Putative phosphotransferase 057R from Dryophytes versicolor (chameleon treefrog).